The primary structure comprises 508 residues: Phenylacetaldehyde synthase (508 aa).

L-phenylalanine contacts are provided by histidine 203 and histidine 318. Lysine 319 is subject to N6-(pyridoxal phosphate)lysine. Residue phenylalanine 348 participates in L-phenylalanine binding.

The protein belongs to the group II decarboxylase family. As to quaternary structure, homotetramer. Pyridoxal 5'-phosphate serves as cofactor.

It catalyses the reaction L-phenylalanine + O2 + H2O + H(+) = 2-phenylacetaldehyde + H2O2 + NH4(+) + CO2. Its function is as follows. Bifunctional enzyme that catalyzes the decarboxylation of L-phenylalanine to produce 2-phenylethylamine, which is then oxidized to form 2-phenylacetaldehyde, a constituent of floral scent in petals. 2-phenylacetaldehyde is a precursor of 2-phenylethanol, another constituent of floral scent in petals. The chain is Phenylacetaldehyde synthase from Rosa hybrid cultivar.